The sequence spans 448 residues: Tubulin alpha chain, nucleomorph (448 aa).

Positions 11, 71, 140, 144, 145, 179, 206, and 228 each coordinate GTP. Position 71 (Glu71) interacts with Mg(2+). The active site involves Glu254.

This sequence belongs to the tubulin family. In terms of assembly, dimer of alpha and beta chains. A typical microtubule is a hollow water-filled tube with an outer diameter of 25 nm and an inner diameter of 15 nM. Alpha-beta heterodimers associate head-to-tail to form protofilaments running lengthwise along the microtubule wall with the beta-tubulin subunit facing the microtubule plus end conferring a structural polarity. Microtubules usually have 13 protofilaments but different protofilament numbers can be found in some organisms and specialized cells. Mg(2+) serves as cofactor.

It catalyses the reaction GTP + H2O = GDP + phosphate + H(+). In terms of biological role, tubulin is the major constituent of microtubules, a cylinder consisting of laterally associated linear protofilaments composed of alpha- and beta-tubulin heterodimers. Microtubules grow by the addition of GTP-tubulin dimers to the microtubule end, where a stabilizing cap forms. Below the cap, tubulin dimers are in GDP-bound state, owing to GTPase activity of alpha-tubulin. This chain is Tubulin alpha chain, nucleomorph (tubA), found in Guillardia theta (Cryptophyte).